The sequence spans 160 residues: Ureidoglycolate lyase (160 aa).

Belongs to the ureidoglycolate lyase family. In terms of assembly, homodimer. It depends on Ni(2+) as a cofactor.

The enzyme catalyses (S)-ureidoglycolate = urea + glyoxylate. Its pathway is nitrogen metabolism; (S)-allantoin degradation. Its function is as follows. Catalyzes the catabolism of the allantoin degradation intermediate (S)-ureidoglycolate, generating urea and glyoxylate. Involved in the utilization of allantoin as nitrogen source. The polypeptide is Ureidoglycolate lyase (Salmonella enteritidis).